We begin with the raw amino-acid sequence, 464 residues long: MAVYNYDVVVIGTGPAGEGAAMNAVKAGRKVAVVDDRPQVGGNCTHLGTIPSKALRHSVRQIMQYNNNPLFRQIGEPRWFSFADVLKSAEQVIAKQVSSRTGYYARNRIDTFFGTASFCDEHTIEVVHLNGMVETLVAKQFVIATGSRPYRPADVDFTHPRIYDSDTILSLGHTPRRLIIYGAGVIGCEYASIFSGLGVLVDLIDNRDQLLSFLDDEISDSLSYHLRNNNVLIRHNEEYERVEGLDNGVILHLKSGKKIKADAFLWSNGRTGNTDKLGLENIGLKANGRGQIQVDEHYRTEVSNIYAAGDVIGWPSLASAAYDQGRSAAGSITENDSWRFVDDVPTGIYTIPEISSVGKTERELTQAKVPYEVGKAFFKGMARAQIAVEKAGMLKILFHRETLEILGVHCFGYQASEIVHIGQAIMNQKGEANTLKYFINTTFNYPTMAEAYRVAAYDGLNRLF.

Residue 35–44 (DDRPQVGGNC) participates in FAD binding.

This sequence belongs to the class-I pyridine nucleotide-disulfide oxidoreductase family. FAD is required as a cofactor.

Its subcellular location is the cytoplasm. The catalysed reaction is NAD(+) + NADPH = NADH + NADP(+). Conversion of NADPH, generated by peripheral catabolic pathways, to NADH, which can enter the respiratory chain for energy generation. The sequence is that of Soluble pyridine nucleotide transhydrogenase from Azotobacter vinelandii (strain DJ / ATCC BAA-1303).